The sequence spans 248 residues: Pyridoxine 5'-phosphate synthase (248 aa).

N10 serves as a coordination point for 3-amino-2-oxopropyl phosphate. 12–13 (DH) lines the 1-deoxy-D-xylulose 5-phosphate pocket. A 3-amino-2-oxopropyl phosphate-binding site is contributed by R21. H46 serves as the catalytic Proton acceptor. Residues R48 and H53 each coordinate 1-deoxy-D-xylulose 5-phosphate. Residue E73 is the Proton acceptor of the active site. T103 contributes to the 1-deoxy-D-xylulose 5-phosphate binding site. H194 functions as the Proton donor in the catalytic mechanism. Residues G195 and 216 to 217 (GH) each bind 3-amino-2-oxopropyl phosphate.

Belongs to the PNP synthase family. In terms of assembly, homooctamer; tetramer of dimers.

It localises to the cytoplasm. The catalysed reaction is 3-amino-2-oxopropyl phosphate + 1-deoxy-D-xylulose 5-phosphate = pyridoxine 5'-phosphate + phosphate + 2 H2O + H(+). It participates in cofactor biosynthesis; pyridoxine 5'-phosphate biosynthesis; pyridoxine 5'-phosphate from D-erythrose 4-phosphate: step 5/5. Functionally, catalyzes the complicated ring closure reaction between the two acyclic compounds 1-deoxy-D-xylulose-5-phosphate (DXP) and 3-amino-2-oxopropyl phosphate (1-amino-acetone-3-phosphate or AAP) to form pyridoxine 5'-phosphate (PNP) and inorganic phosphate. This is Pyridoxine 5'-phosphate synthase from Legionella pneumophila (strain Corby).